We begin with the raw amino-acid sequence, 369 residues long: Nudix hydrolase 8 (369 aa).

The Nudix hydrolase domain occupies 188–318 (SHQVGVGGFV…GDKMFKRVIE (131 aa)). The Nudix box signature appears at 225-246 (GFINESEEIFSGAVREVKEETG). 2 residues coordinate Mg(2+): Glu-240 and Glu-244.

This sequence belongs to the Nudix hydrolase family. Requires Mg(2+) as cofactor. Mn(2+) is required as a cofactor. Expressed in roots, stems and, at lower level, leaves.

Its function is as follows. Probably mediates the hydrolysis of some nucleoside diphosphate derivatives. May be involved in plant immunity and act as a positive regulator of defense response through salicylic acid (SA) signaling. The polypeptide is Nudix hydrolase 8 (NUDT8) (Arabidopsis thaliana (Mouse-ear cress)).